A 105-amino-acid polypeptide reads, in one-letter code: UPF0235 protein A1C_06510 (105 aa).

Belongs to the UPF0235 family.

The sequence is that of UPF0235 protein A1C_06510 from Rickettsia akari (strain Hartford).